The following is a 93-amino-acid chain: Putative transmembrane protein ORF25 (93 aa).

The next 3 helical transmembrane spans lie at 1 to 21 (MAGI…NVNA), 22 to 42 (FLVL…YASI), and 60 to 80 (LWIF…VMSL).

It localises to the host membrane. The chain is Putative transmembrane protein ORF25 from His1 virus (isolate Australia/Victoria) (His1V).